The sequence spans 438 residues: Glutaryl-CoA dehydrogenase, mitochondrial (438 aa).

The transit peptide at 1-44 (MALRGVSVRLLSRGPGLHVLRTWVSSAAQTEKGGRTQSQLAKSS) directs the protein to the mitochondrion. Residues 138-139 (RS) and serine 186 each bind substrate. FAD contacts are provided by residues 177-186 (FGLTEPNSGS) and 212-214 (WIT). Residue lysine 240 is modified to N6-acetyllysine. Substrate is bound at residue 287 to 294 (FGCLNNAR). FAD is bound by residues arginine 319, glutamine 330, and 387–391 (DMLGG). Glutamate 414 functions as the Proton acceptor in the catalytic mechanism. Glycine 415 lines the substrate pocket. FAD is bound by residues 416-418 (THD) and phenylalanine 434.

The protein belongs to the acyl-CoA dehydrogenase family. As to quaternary structure, homotetramer. FAD serves as cofactor. As to expression, isoform Long and isoform Short are expressed in fibroblasts and liver.

It is found in the mitochondrion matrix. It catalyses the reaction glutaryl-CoA + oxidized [electron-transfer flavoprotein] + 2 H(+) = (2E)-butenoyl-CoA + reduced [electron-transfer flavoprotein] + CO2. Its pathway is amino-acid metabolism; lysine degradation. The protein operates within amino-acid metabolism; tryptophan metabolism. With respect to regulation, strongly inhibited by MCPA-CoA, a metabolite of hypoglycin which is present in unripened fruit of the ackee tree. Its function is as follows. Catalyzes the oxidative decarboxylation of glutaryl-CoA to crotonyl-CoA and CO(2) in the degradative pathway of L-lysine, L-hydroxylysine, and L-tryptophan metabolism. It uses electron transfer flavoprotein as its electron acceptor. Isoform Short is inactive. This is Glutaryl-CoA dehydrogenase, mitochondrial (GCDH) from Homo sapiens (Human).